A 392-amino-acid chain; its full sequence is S-adenosylmethionine synthase (392 aa).

His15 contacts ATP. Mg(2+) is bound at residue Asp17. Glu43 contributes to the K(+) binding site. L-methionine contacts are provided by Glu56 and Gln99. Positions 99–109 are flexible loop; that stretch reads QSKDIAQGVDE. Residues 173 to 175, 239 to 240, Asp248, 254 to 255, Ala271, and Lys275 each bind ATP; these read DGK, KF, and RK. Asp248 contributes to the L-methionine binding site. Lys279 contacts L-methionine.

Belongs to the AdoMet synthase family. In terms of assembly, homotetramer; dimer of dimers. Requires Mg(2+) as cofactor. K(+) is required as a cofactor.

It is found in the cytoplasm. It carries out the reaction L-methionine + ATP + H2O = S-adenosyl-L-methionine + phosphate + diphosphate. Its pathway is amino-acid biosynthesis; S-adenosyl-L-methionine biosynthesis; S-adenosyl-L-methionine from L-methionine: step 1/1. In terms of biological role, catalyzes the formation of S-adenosylmethionine (AdoMet) from methionine and ATP. The overall synthetic reaction is composed of two sequential steps, AdoMet formation and the subsequent tripolyphosphate hydrolysis which occurs prior to release of AdoMet from the enzyme. The chain is S-adenosylmethionine synthase from Finegoldia magna (strain ATCC 29328 / DSM 20472 / WAL 2508) (Peptostreptococcus magnus).